The following is a 256-amino-acid chain: Thiazole synthase (256 aa).

Lys95 (schiff-base intermediate with DXP) is an active-site residue. Residues Gly156, Ala182–Gly183, and Asn204–Thr205 each bind 1-deoxy-D-xylulose 5-phosphate.

This sequence belongs to the ThiG family. As to quaternary structure, homotetramer. Forms heterodimers with either ThiH or ThiS.

Its subcellular location is the cytoplasm. It carries out the reaction [ThiS sulfur-carrier protein]-C-terminal-Gly-aminoethanethioate + 2-iminoacetate + 1-deoxy-D-xylulose 5-phosphate = [ThiS sulfur-carrier protein]-C-terminal Gly-Gly + 2-[(2R,5Z)-2-carboxy-4-methylthiazol-5(2H)-ylidene]ethyl phosphate + 2 H2O + H(+). It functions in the pathway cofactor biosynthesis; thiamine diphosphate biosynthesis. Its function is as follows. Catalyzes the rearrangement of 1-deoxy-D-xylulose 5-phosphate (DXP) to produce the thiazole phosphate moiety of thiamine. Sulfur is provided by the thiocarboxylate moiety of the carrier protein ThiS. In vitro, sulfur can be provided by H(2)S. This chain is Thiazole synthase, found in Salmonella paratyphi B (strain ATCC BAA-1250 / SPB7).